The following is a 411-amino-acid chain: Adenylosuccinate synthetase (411 aa).

GTP is bound by residues 11-17 (GDEGKGK) and 39-41 (GHT). Aspartate 12 serves as the catalytic Proton acceptor. Aspartate 12 and glycine 39 together coordinate Mg(2+). Residues 12 to 15 (DEGK), 37 to 40 (NAGH), threonine 121, arginine 135, glutamine 215, threonine 230, and arginine 294 each bind IMP. The Proton donor role is filled by histidine 40. Substrate is bound at residue 290 to 296 (TTTKRPR). Residues arginine 296, 322–324 (KLD), and 400–402 (STS) each bind GTP.

Belongs to the adenylosuccinate synthetase family. As to quaternary structure, homodimer. The cofactor is Mg(2+).

It is found in the cytoplasm. It catalyses the reaction IMP + L-aspartate + GTP = N(6)-(1,2-dicarboxyethyl)-AMP + GDP + phosphate + 2 H(+). It participates in purine metabolism; AMP biosynthesis via de novo pathway; AMP from IMP: step 1/2. In terms of biological role, plays an important role in the de novo pathway of purine nucleotide biosynthesis. Catalyzes the first committed step in the biosynthesis of AMP from IMP. The protein is Adenylosuccinate synthetase of Helicobacter pylori (strain G27).